A 318-amino-acid chain; its full sequence is Beta-ketoacyl-[acyl-carrier-protein] synthase III (318 aa).

Residues Cys-113 and His-245 contribute to the active site. Residues Gln-246 to Arg-250 form an ACP-binding region. Residue Asn-275 is part of the active site.

This sequence belongs to the thiolase-like superfamily. FabH family. Homodimer.

Its subcellular location is the cytoplasm. It carries out the reaction malonyl-[ACP] + acetyl-CoA + H(+) = 3-oxobutanoyl-[ACP] + CO2 + CoA. It participates in lipid metabolism; fatty acid biosynthesis. Catalyzes the condensation reaction of fatty acid synthesis by the addition to an acyl acceptor of two carbons from malonyl-ACP. Catalyzes the first condensation reaction which initiates fatty acid synthesis and may therefore play a role in governing the total rate of fatty acid production. Possesses both acetoacetyl-ACP synthase and acetyl transacylase activities. Its substrate specificity determines the biosynthesis of branched-chain and/or straight-chain of fatty acids. This chain is Beta-ketoacyl-[acyl-carrier-protein] synthase III, found in Wolbachia pipientis wMel.